The following is a 283-amino-acid chain: Glutamate racemase (283 aa).

Residues 28 to 29 (DS) and 60 to 61 (YG) contribute to the substrate site. Cysteine 92 functions as the Proton donor/acceptor in the catalytic mechanism. Substrate is bound at residue 93-94 (NT). Catalysis depends on cysteine 204, which acts as the Proton donor/acceptor. Residue 205–206 (TH) participates in substrate binding.

It belongs to the aspartate/glutamate racemases family.

It catalyses the reaction L-glutamate = D-glutamate. Its pathway is cell wall biogenesis; peptidoglycan biosynthesis. Functionally, provides the (R)-glutamate required for cell wall biosynthesis. This Salmonella enteritidis PT4 (strain P125109) protein is Glutamate racemase.